The sequence spans 308 residues: Testis-specific Y-encoded protein 1 (308 aa).

The protein belongs to the nucleosome assembly protein (NAP) family. Phosphorylated. In terms of tissue distribution, specifically expressed in testicular tissues. Isoform 1 and isoform 2 are expressed in spermatogonia and spermatocytes. Found in early testicular carcinoma in situ, spermatogonial cells in testicular tissues of 46,X,Y female and in prostate cancer cell lines.

Its subcellular location is the cytoplasm. It is found in the nucleus. May be involved in sperm differentiation and proliferation. In Homo sapiens (Human), this protein is Testis-specific Y-encoded protein 1 (TSPY1).